The sequence spans 622 residues: Probable ATP-dependent RNA helicase DDX41 (622 aa).

The segment covering 1–15 (MEDSEPERKRARADE) has biased composition (basic and acidic residues). Disordered regions lie at residues 1–39 (MEDS…YVPL) and 51–84 (LQRR…PQSN). At Ser4 the chain carries Phosphoserine. Residue Lys9 is modified to N6-acetyllysine. Lys9 is covalently cross-linked (Glycyl lysine isopeptide (Lys-Gly) (interchain with G-Cter in ubiquitin)). 2 positions are modified to phosphoserine: Ser21 and Ser23. Residues 24-33 (EDEDEDDEDY) are compositionally biased toward acidic residues. Tyr33 is subject to Phosphotyrosine. Residue Lys115 forms a Glycyl lysine isopeptide (Lys-Gly) (interchain with G-Cter in ubiquitin) linkage. A Q motif motif is present at residues 181–209 (KSFKEMKFPAAILRGLKKKGILHPTPIQI). One can recognise a Helicase ATP-binding domain in the interval 212–396 (IPTILSGRDM…KSALVKPVTI (185 aa)). 225–232 (AFTGSGKT) serves as a coordination point for ATP. The DEAD box motif lies at 344–347 (DEAD). The Helicase C-terminal domain occupies 407-567 (DVIQEVEYVK…KVPPVLQVLH (161 aa)). A Phosphotyrosine modification is found at Tyr414. Glycyl lysine isopeptide (Lys-Gly) (interchain with G-Cter in SUMO2) cross-links involve residues Lys416 and Lys442. A CCHC-type zinc finger spans residues 580–597 (RGCAFCGGLGHRITDCPK).

It belongs to the DEAD box helicase family. DDX41 subfamily. Identified in the spliceosome C complex. Interacts with ERCC6. Interacts with FAM50A. Interacts with STING1. Interacts with CGAS. Interacts with several spliceosomes components such as PRP19 or CDC5L. Acetylation at Lys-9 regulates the nuclear/cytoplasmic localization. In terms of processing, phosphorylated by BTK; phosphorylation induces binding to dsDNA and STING1. Post-translationally, 'Lys-48'-linked ubiquitinated and degraded by TRIM21 leading to negative regulation of the innate immune response to intracellular dsDNA.

Its subcellular location is the nucleus. It localises to the cytoplasm. The enzyme catalyses ATP + H2O = ADP + phosphate + H(+). Multifunctional protein that participates in many aspects of cellular RNA metabolism. Plays pivotal roles in innate immune sensing and hematopoietic homeostasis. Recognizes foreign or self-nucleic acids generated during microbial infection, thereby initiating anti-pathogen responses. Mechanistically, phosphorylation by BTK allows binding to dsDNA leading to interaction with STING1. Modulates the homeostasis of dsDNA through its ATP-dependent DNA-unwinding activity and ATP-independent strand-annealing activity. In turn, induces STING1-mediated type I interferon and cytokine responses to DNA and DNA viruses. During murine leukemia virus infection, primarily senses the DNA/RNA hybrid generated at the first step of reverse transcription, while cGAS recognizes dsDNA generated at the next step and both are needed for the antiretroviral innate immune response. Selectively modulates the transcription of certain immunity-associated genes by regulating their alternative splicing. Binds to RNA (R)-loops, structures consisting of DNA/RNA hybrids and a displaced strand of DNA that occur during transcription, and prevents their accumulation, thereby maintaining genome stability. Also participates in pre-mRNA splicing, translational regulation and snoRNA processing, which is essential for ribosome biogenesis. The protein is Probable ATP-dependent RNA helicase DDX41 (Ddx41) of Mus musculus (Mouse).